A 111-amino-acid chain; its full sequence is ATP synthase subunit c (111 aa).

A run of 2 helical transmembrane segments spans residues 38–58 (GLGV…GSGL) and 89–109 (AGIA…LIFV).

This sequence belongs to the ATPase C chain family. In terms of assembly, F-type ATPases have 2 components, F(1) - the catalytic core - and F(0) - the membrane proton channel. F(1) has five subunits: alpha(3), beta(3), gamma(1), delta(1), epsilon(1). F(0) has three main subunits: a(1), b(2) and c(10-14). The alpha and beta chains form an alternating ring which encloses part of the gamma chain. F(1) is attached to F(0) by a central stalk formed by the gamma and epsilon chains, while a peripheral stalk is formed by the delta and b chains.

Its subcellular location is the cell membrane. Its function is as follows. F(1)F(0) ATP synthase produces ATP from ADP in the presence of a proton or sodium gradient. F-type ATPases consist of two structural domains, F(1) containing the extramembraneous catalytic core and F(0) containing the membrane proton channel, linked together by a central stalk and a peripheral stalk. During catalysis, ATP synthesis in the catalytic domain of F(1) is coupled via a rotary mechanism of the central stalk subunits to proton translocation. In terms of biological role, key component of the F(0) channel; it plays a direct role in translocation across the membrane. A homomeric c-ring of between 10-14 subunits forms the central stalk rotor element with the F(1) delta and epsilon subunits. The protein is ATP synthase subunit c of Mycoplasmopsis synoviae (strain 53) (Mycoplasma synoviae).